Reading from the N-terminus, the 172-residue chain is Small ribosomal subunit protein uS5 (172 aa).

Residues leucine 17–valine 80 form the S5 DRBM domain.

The protein belongs to the universal ribosomal protein uS5 family. In terms of assembly, part of the 30S ribosomal subunit. Contacts proteins S4 and S8.

In terms of biological role, with S4 and S12 plays an important role in translational accuracy. Functionally, located at the back of the 30S subunit body where it stabilizes the conformation of the head with respect to the body. The protein is Small ribosomal subunit protein uS5 of Paraburkholderia phytofirmans (strain DSM 17436 / LMG 22146 / PsJN) (Burkholderia phytofirmans).